The sequence spans 257 residues: Pyridoxine 5'-phosphate synthase (257 aa).

Position 16 (asparagine 16) interacts with 3-amino-2-oxopropyl phosphate. 18–19 lines the 1-deoxy-D-xylulose 5-phosphate pocket; it reads DH. Arginine 27 provides a ligand contact to 3-amino-2-oxopropyl phosphate. Residue histidine 52 is the Proton acceptor of the active site. 1-deoxy-D-xylulose 5-phosphate-binding residues include arginine 54 and histidine 59. Glutamate 79 functions as the Proton acceptor in the catalytic mechanism. Threonine 109 serves as a coordination point for 1-deoxy-D-xylulose 5-phosphate. The Proton donor role is filled by histidine 200. 3-amino-2-oxopropyl phosphate contacts are provided by residues glycine 201 and 222-223; that span reads GH.

The protein belongs to the PNP synthase family. In terms of assembly, homooctamer; tetramer of dimers.

It is found in the cytoplasm. The catalysed reaction is 3-amino-2-oxopropyl phosphate + 1-deoxy-D-xylulose 5-phosphate = pyridoxine 5'-phosphate + phosphate + 2 H2O + H(+). It functions in the pathway cofactor biosynthesis; pyridoxine 5'-phosphate biosynthesis; pyridoxine 5'-phosphate from D-erythrose 4-phosphate: step 5/5. In terms of biological role, catalyzes the complicated ring closure reaction between the two acyclic compounds 1-deoxy-D-xylulose-5-phosphate (DXP) and 3-amino-2-oxopropyl phosphate (1-amino-acetone-3-phosphate or AAP) to form pyridoxine 5'-phosphate (PNP) and inorganic phosphate. In Burkholderia pseudomallei (strain 1710b), this protein is Pyridoxine 5'-phosphate synthase.